Here is a 451-residue protein sequence, read N- to C-terminus: UDP-N-acetylmuramoylalanine--D-glutamate ligase (451 aa).

An ATP-binding site is contributed by 119 to 125 (GSNGKTT).

Belongs to the MurCDEF family.

It is found in the cytoplasm. It catalyses the reaction UDP-N-acetyl-alpha-D-muramoyl-L-alanine + D-glutamate + ATP = UDP-N-acetyl-alpha-D-muramoyl-L-alanyl-D-glutamate + ADP + phosphate + H(+). The protein operates within cell wall biogenesis; peptidoglycan biosynthesis. In terms of biological role, cell wall formation. Catalyzes the addition of glutamate to the nucleotide precursor UDP-N-acetylmuramoyl-L-alanine (UMA). This chain is UDP-N-acetylmuramoylalanine--D-glutamate ligase, found in Streptococcus mutans serotype c (strain ATCC 700610 / UA159).